The chain runs to 229 residues: Adenylate kinase (229 aa).

A propeptide spanning residues 1–9 (MLSTLAKRF) is cleaved from the precursor. 25–30 (GVGKGT) contributes to the ATP binding site. Residues 45 to 74 (STGDALRAEIRGQTPLGKRVKGIIESGGLV) form an NMP region. AMP contacts are provided by residues Thr-46, Arg-51, 72-74 (GLV), 100-103 (GIPR), and Gln-107. The tract at residues 141–178 (GRLFHPGSGRVYHKVTNPPKKPMTDDITGEPLIIRKDD) is LID. Arg-142 is an ATP binding site. Positions 175 and 186 each coordinate AMP. Gly-214 is an ATP binding site.

Belongs to the adenylate kinase family.

Its subcellular location is the hydrogenosome. The enzyme catalyses AMP + ATP = 2 ADP. Catalyzes the reversible transfer of the terminal phosphate group between ATP and AMP. Plays an important role in cellular energy homeostasis and in adenine nucleotide metabolism. This chain is Adenylate kinase, found in Trichomonas vaginalis.